A 404-amino-acid chain; its full sequence is Probable tRNA sulfurtransferase (404 aa).

A THUMP domain is found at 60 to 165 (QPVVEALKLV…DEAAYISYEE (106 aa)). ATP is bound by residues 183–184 (ML), 208–209 (HF), Arg-265, Gly-287, and Gln-296.

Belongs to the ThiI family.

Its subcellular location is the cytoplasm. The enzyme catalyses [ThiI sulfur-carrier protein]-S-sulfanyl-L-cysteine + a uridine in tRNA + 2 reduced [2Fe-2S]-[ferredoxin] + ATP + H(+) = [ThiI sulfur-carrier protein]-L-cysteine + a 4-thiouridine in tRNA + 2 oxidized [2Fe-2S]-[ferredoxin] + AMP + diphosphate. It catalyses the reaction [ThiS sulfur-carrier protein]-C-terminal Gly-Gly-AMP + S-sulfanyl-L-cysteinyl-[cysteine desulfurase] + AH2 = [ThiS sulfur-carrier protein]-C-terminal-Gly-aminoethanethioate + L-cysteinyl-[cysteine desulfurase] + A + AMP + 2 H(+). The protein operates within cofactor biosynthesis; thiamine diphosphate biosynthesis. Catalyzes the ATP-dependent transfer of a sulfur to tRNA to produce 4-thiouridine in position 8 of tRNAs, which functions as a near-UV photosensor. Also catalyzes the transfer of sulfur to the sulfur carrier protein ThiS, forming ThiS-thiocarboxylate. This is a step in the synthesis of thiazole, in the thiamine biosynthesis pathway. The sulfur is donated as persulfide by IscS. This Streptococcus pyogenes serotype M6 (strain ATCC BAA-946 / MGAS10394) protein is Probable tRNA sulfurtransferase.